The chain runs to 722 residues: Zinc finger protein 219 (722 aa).

The segment at 1-21 (MEGSRPRAPSGHLAPSPPAFD) is disordered. S16 carries the post-translational modification Phosphoserine. 2 C2H2-type zinc fingers span residues 57–79 (FPCP…LRAH) and 85–107 (FQCP…LRTH). Positions 137–160 (ARSSGGMQATPATEGLARPQAPSS) are disordered. 2 consecutive C2H2-type zinc fingers follow at residues 163 to 186 (FRCP…HILH) and 189 to 212 (WKCG…LTAH). Positions 215–275 (PERPLAATSA…EEPPAPPEFR (61 aa)) are disordered. 2 stretches are compositionally biased toward pro residues: residues 225 to 247 (APPP…PQPE) and 259 to 272 (TPAP…PAPP). 2 consecutive C2H2-type zinc fingers follow at residues 274-296 (FRCQ…MRKH) and 302-324 (HACP…MKVH). The interval 384 to 495 (LRAGEGRPNG…GTRPEGGRGA (112 aa)) is disordered. The segment covering 390 to 404 (RPNGEGAEPGPGRSF) has biased composition (gly residues). Positions 425 to 438 (EPEEEEEVVEAEEE) are enriched in acidic residues. The segment covering 463–477 (SASAAGAQARSTATQ) has biased composition (low complexity). 2 C2H2-type zinc fingers span residues 498–520 (KDCP…LRVH) and 526–548 (YKCP…LQRH). 2 disordered regions span residues 542–648 (KYHL…LHRC) and 668–722 (HHSR…GQER). Over residues 558-568 (PGPPPEPPPPS) the composition is skewed to pro residues. Residues 634 to 643 (GPGGEAGPGG) show a composition bias toward gly residues. A C2H2-type 9 zinc finger spans residues 646-668 (HRCLFCPFATGAPELMALHLQVH). Residues 668–677 (HHSRRARGRR) show a composition bias toward basic residues. S692 carries the post-translational modification Phosphoserine. T695 is subject to Phosphothreonine. S698 carries the post-translational modification Phosphoserine.

This sequence belongs to the krueppel C2H2-type zinc-finger protein family. As to quaternary structure, interacts with SOX9 (via C-terminus). In terms of tissue distribution, ubiquitous.

Its subcellular location is the nucleus. In terms of biological role, transcriptional regulator. Recognizes and binds 2 copies of the core DNA sequence motif 5'-GGGGG-3'. Binds to the HMGN1 promoter and may repress HMGN1 expression. Regulates SNCA expression in primary cortical neurons. Binds to the COL2A1 promoter and activates COL2A1 expression, as part of a complex with SOX9. Plays a role in chondrocyte differentiation. The protein is Zinc finger protein 219 (ZNF219) of Homo sapiens (Human).